A 339-amino-acid chain; its full sequence is MTFRMPPEWAPHERTWMAWPGPNATFTDAEELAGARAAWASVARAVRRFEPVTMVHGPGQAATARELLGPDVDLVERELDDAWMRDIGPTFVTDGRGGLAAVDWVFNGWGAQDWARWEHDAEIARHVADLAAAPVLSSPLVNEGGAIHVDGEGTVLLTDTVQLGSGRNPGWSREEVEAEIHAKLGTTTAIWLPHGLAGDYGRYGTQGHVDIVAAFARPGTVVVHSQRDPRHPDHERSQLYLEILRGRTDARGRRLEVVEVPAPTVLKDEEGEWADYSYINHYVCNGGVVLCAFGDPNDELAAGIFRRLFPERTVTLVDARTIFAGGGGIHCITQQQPRT.

Residue cysteine 331 is the Amidino-cysteine intermediate of the active site.

Belongs to the agmatine deiminase family.

It catalyses the reaction agmatine + H2O = N-carbamoylputrescine + NH4(+). In Streptomyces coelicolor (strain ATCC BAA-471 / A3(2) / M145), this protein is Putative agmatine deiminase.